The primary structure comprises 202 residues: Nascent polypeptide-associated complex subunit alpha (202 aa).

Over residues 1 to 19 (MADPRVEELPDEEVPKTNV) the composition is skewed to basic and acidic residues. Residues 1–42 (MADPRVEELPDEEVPKTNVEDAGSSSESEAGDEPTIPGGAAV) are disordered. In terms of domain architecture, NAC-A/B spans 46–111 (SRNEKKARKA…AKIEDLNATA (66 aa)). Residues 117–126 (QQLAEAAANE) show a composition bias toward low complexity. Residues 117–165 (QQLAEAAANEHAGHDHEHDHGKGKAPEAEAKKEEEEDDGEEVDESGLEA) form a disordered region. Positions 127 to 149 (HAGHDHEHDHGKGKAPEAEAKKE) are enriched in basic and acidic residues. Positions 150–162 (EEEDDGEEVDESG) are enriched in acidic residues. A UBA domain is found at 163–202 (LEAKDIELVMAQANVSRKKAVKALRENDNDIVNSIMALSI).

The protein belongs to the NAC-alpha family. As to quaternary structure, part of the nascent polypeptide-associated complex (NAC), consisting of egd2 and egd1. NAC associates with ribosomes via egd1.

It is found in the cytoplasm. Its subcellular location is the nucleus. Its function is as follows. Component of the nascent polypeptide-associated complex (NAC), a dynamic component of the ribosomal exit tunnel, protecting the emerging polypeptides from interaction with other cytoplasmic proteins to ensure appropriate nascent protein targeting. The NAC complex also promotes mitochondrial protein import by enhancing productive ribosome interactions with the outer mitochondrial membrane and blocks the inappropriate interaction of ribosomes translating non-secretory nascent polypeptides with translocation sites in the membrane of the endoplasmic reticulum. Egd2 may also be involved in transcription regulation. The sequence is that of Nascent polypeptide-associated complex subunit alpha (egd2) from Aspergillus niger (strain ATCC MYA-4892 / CBS 513.88 / FGSC A1513).